Consider the following 84-residue polypeptide: Putative regulatory protein Dde_2720 (84 aa).

This sequence belongs to the RemA family.

In Oleidesulfovibrio alaskensis (strain ATCC BAA-1058 / DSM 17464 / G20) (Desulfovibrio alaskensis), this protein is Putative regulatory protein Dde_2720.